The primary structure comprises 164 residues: Endoribonuclease YbeY (164 aa).

His-114, His-118, and His-124 together coordinate Zn(2+).

This sequence belongs to the endoribonuclease YbeY family. Zn(2+) serves as cofactor.

The protein localises to the cytoplasm. Its function is as follows. Single strand-specific metallo-endoribonuclease involved in late-stage 70S ribosome quality control and in maturation of the 3' terminus of the 16S rRNA. The polypeptide is Endoribonuclease YbeY (Mycoplasmoides gallisepticum (strain R(low / passage 15 / clone 2)) (Mycoplasma gallisepticum)).